We begin with the raw amino-acid sequence, 130 residues long: Histone H2A type 1 (130 aa).

The segment at 1-22 (MSGRGKQGGKARAKAKTRSSRA) is disordered. Ser2 is subject to N-acetylserine. A Phosphoserine; by RPS6KA5 modification is found at Ser2. Arg4 is subject to Citrulline; alternate. Arg4 is subject to Symmetric dimethylarginine; by PRMT5; alternate. Lys6 bears the N6-(2-hydroxyisobutyryl)lysine mark. A compositionally biased stretch (basic residues) spans 7–19 (QGGKARAKAKTRS). Lys10 carries the N6-(2-hydroxyisobutyryl)lysine; alternate modification. Lys10 carries the post-translational modification N6-lactoyllysine; alternate. Lys10 carries the post-translational modification N6-succinyllysine; alternate. Glycyl lysine isopeptide (Lys-Gly) (interchain with G-Cter in ubiquitin) cross-links involve residues Lys14 and Lys16. Position 37 is an N6-(2-hydroxyisobutyryl)lysine; alternate (Lys37). At Lys37 the chain carries N6-(beta-hydroxybutyryl)lysine; alternate. Lys37 is modified (N6-crotonyllysine; alternate). Lys75 and Lys76 each carry N6-(2-hydroxyisobutyryl)lysine. At Lys96 the chain carries N6-(2-hydroxyisobutyryl)lysine; alternate. Position 96 is an N6-succinyllysine; alternate (Lys96). Lys96 is modified (N6-glutaryllysine; alternate). Lys100 carries the N6-glutaryllysine modification. Gln105 carries the N5-methylglutamine modification. Lys119 carries the N6-(2-hydroxyisobutyryl)lysine; alternate modification. Lys119 and Lys120 each carry N6-crotonyllysine; alternate. Lys119 and Lys120 each carry N6-glutaryllysine; alternate. Lys120 participates in a covalent cross-link: Glycyl lysine isopeptide (Lys-Gly) (interchain with G-Cter in ubiquitin); alternate. Phosphothreonine; by DCAF1 is present on Thr121. At Lys126 the chain carries N6-crotonyllysine; alternate. The residue at position 126 (Lys126) is an N6-glutaryllysine; alternate.

The protein belongs to the histone H2A family. The nucleosome is a histone octamer containing two molecules each of H2A, H2B, H3 and H4 assembled in one H3-H4 heterotetramer and two H2A-H2B heterodimers. The octamer wraps approximately 147 bp of DNA. Interacts with VRK1; the interaction is mediated by the nucleosome acidic patch, a cluster of negatively charged residues of H2A and H2B forming a cleft within the nucleosome core. Deiminated on Arg-4 in granulocytes upon calcium entry. In terms of processing, monoubiquitination of Lys-120 (H2AK119Ub) by RING1, TRIM37 and RNF2/RING2 complex gives a specific tag for epigenetic transcriptional repression and participates in X chromosome inactivation of female mammals. It is involved in the initiation of both imprinted and random X inactivation. Ubiquitinated H2A is enriched in inactive X chromosome chromatin. Ubiquitination of H2A functions downstream of methylation of 'Lys-27' of histone H3 (H3K27me). H2AK119Ub by RNF2/RING2 can also be induced by ultraviolet and may be involved in DNA repair. Following DNA double-strand breaks (DSBs), it is ubiquitinated through 'Lys-63' linkage of ubiquitin moieties by the E2 ligase UBE2N and the E3 ligases RNF8 and RNF168, leading to the recruitment of repair proteins to sites of DNA damage. Ubiquitination at Lys-14 and Lys-16 (H2AK13Ub and H2AK15Ub, respectively) in response to DNA damage is initiated by RNF168 that mediates monoubiquitination at these 2 sites, and 'Lys-63'-linked ubiquitin are then conjugated to monoubiquitin; RNF8 is able to extend 'Lys-63'-linked ubiquitin chains in vitro. H2AK119Ub and ionizing radiation-induced 'Lys-63'-linked ubiquitination (H2AK13Ub and H2AK15Ub) are distinct events. Post-translationally, phosphorylation on Ser-2 (H2AS1ph) is enhanced during mitosis. Phosphorylation on Ser-2 by RPS6KA5/MSK1 directly represses transcription. Acetylation of H3 inhibits Ser-2 phosphorylation by RPS6KA5/MSK1. Phosphorylation at Thr-121 (H2AT120ph) by DCAF1 is present in the regulatory region of many tumor suppresor genes and down-regulates their transcription. Symmetric dimethylation on Arg-4 by the PRDM1/PRMT5 complex may play a crucial role in the germ-cell lineage. In terms of processing, glutamine methylation at Gln-105 (H2AQ104me) by FBL is specifically dedicated to polymerase I. It is present at 35S ribosomal DNA locus and impairs binding of the FACT complex. Post-translationally, crotonylation (Kcr) is specifically present in male germ cells and marks testis-specific genes in post-meiotic cells, including X-linked genes that escape sex chromosome inactivation in haploid cells. Crotonylation marks active promoters and enhancers and confers resistance to transcriptional repressors. It is also associated with post-meiotically activated genes on autosomes. Lactylated in macrophages by EP300/P300 by using lactoyl-CoA directly derived from endogenous or exogenous lactate, leading to stimulates gene transcription.

The protein localises to the nucleus. Its subcellular location is the chromosome. Functionally, core component of nucleosome. Nucleosomes wrap and compact DNA into chromatin, limiting DNA accessibility to the cellular machineries which require DNA as a template. Histones thereby play a central role in transcription regulation, DNA repair, DNA replication and chromosomal stability. DNA accessibility is regulated via a complex set of post-translational modifications of histones, also called histone code, and nucleosome remodeling. The protein is Histone H2A type 1 of Bos taurus (Bovine).